The sequence spans 901 residues: METAPDEAPTEFLEPGEEIVENVIEEEVVHEEDVEHHEEDGEMIEVQHEEVLEEIVEEDGMMFDTDGRVIEYSDVMVYEEGTEVIEEYVEVEDLGDGRYAYVMTDDIGHRRLLKPHEVEAVKKMPGMMEEEVVMDDEKAPNTSYAAAQKRGRFPPQARSSLSPQKPRAAGAYMGPEAYYQQPKRMTHMAKVDVEKYSPVTPVNRRPLMDNAIFKSKLPRKSAPWQEETAANGGPQSTSLIRSPSPMLKEPLFDDNEIRFKCAECGDGFPVMDRLCDHMIKQHDCQTNVREVQFFADRDFENFLLKVEKATLGRDPEDAIRKKSRAGSSQLFVCNYMNKGRQKMAELVEVGIVGLSERPLEVCTAFVQKTHGYECIRVKYCDQHIHYDGNIGFRVPIAVKRRLFEMSFKRLPIPCMQIMLGLEAEQLLPHPTRFEEKLKNLSHVEIIELLQIINASLRKHQEVEPRGKKVPIKFETIKSSEGSQTLMVKRVTPPKKEHMDYDEPDPNIPSTSAQALGYNPDDDEGDDVPMMSREEEVLDDETGEESVMTEDCDGMMEDNMLYDPENNRDPLFDELTEVELGVLDAYEHDIEIALTEAQKKERTRLKAKFALNKVIGIYQTLDTATHGLTAGELHTDTINHLRDMASYVVELVCQIDAEVKVRRNPALRIDDVKRDMIAGIAMQERVHQPERRPRRSAAPASPAKPQYRPQPPARSHEEYTQRIMNKVKEYMPRRRPDAYDLQQGQQQSRLQMLREQTLLRAPLEEEKPPVATMAPVPDEHKAIPWTRPGRKRAMGPGEAATAPAKRRGRPTKKEEAAEAAAKLIQAENEMVVEEEEVEEPPVVEQEQVPKEKEVEVAEAEKLPEQVKTEPSVTPSSAPPTPATTATKTRTGRVVKPKKWDDN.

Disordered stretches follow at residues 147 to 169 and 218 to 245; these read AQKRGRFPPQARSSLSPQKPRAA and PRKSAPWQEETAANGGPQSTSLIRSPSP. The C2H2-type zinc finger occupies 259 to 282; sequence FKCAECGDGFPVMDRLCDHMIKQH. 3 disordered regions span residues 494-528, 682-717, and 779-901; these read KKEHMDYDEPDPNIPSTSAQALGYNPDDDEGDDVP, QERVHQPERRPRRSAAPASPAKPQYRPQPPARSHEE, and HKAI…WDDN. Positions 817-828 are enriched in low complexity; the sequence is EAAAKLIQAENE. Positions 829-840 are enriched in acidic residues; the sequence is MVVEEEEVEEPP. Residues 846–866 are compositionally biased toward basic and acidic residues; sequence QVPKEKEVEVAEAEKLPEQVK.

Its function is as follows. Promotes programmed cell death. Its role in programmed cell death may be in conjunction with cell cycle regulatory factor efl-1 and the synthetic multivulva class B proteins dpl-1 and lin-35, and is independent of the ced-1, ced-8 and ced-9 pathways. The chain is Modifier of cell death from Caenorhabditis elegans.